Here is a 1582-residue protein sequence, read N- to C-terminus: Hybrid PKS-NRPS synthetase TAS1 (1582 aa).

The condensation (C) domain stretch occupies residues 33 to 387 (IPLSKVQEVL…GEDTAAASRV (355 aa)). The segment at 499-892 (RSRAATQPDE…KLHILGRMNN (394 aa)) is adenylation (A) domain. The Carrier domain maps to 1015–1092 (NLVDRLEASI…RQAQRLSELV (78 aa)). One can recognise a Ketosynthase family 3 (KS3) domain in the interval 1127-1574 (APLFAIVGMA…GVNAHCILAS (448 aa)). Residues C1294 and H1432 each act as for beta-ketoacyl synthase activity in the active site. Residues 1460-1485 (ESRCSSGAISPTGTEQQPSDTKQTPR) form a disordered region. The segment covering 1462–1485 (RCSSGAISPTGTEQQPSDTKQTPR) has biased composition (polar residues). The active-site For beta-ketoacyl synthase activity is the N1498.

This sequence in the N-terminal section; belongs to the NRP synthetase family. Pantetheine 4'-phosphate serves as cofactor.

The enzyme catalyses acetoacetyl-CoA + L-isoleucine + ATP = tenuazonic acid + AMP + diphosphate + CoA + 2 H(+). Hybrid PKS-NRPS synthetase that mediates the biosynthesis of the toxin tenuazonic acid (TeA), an inhibitor of protein biosynthesis on ribosomes by suppressing the release of new protein. TAS1 alone is sufficient for TeA synthesis via the condensation of isoleucine (Ile) with acetoacetyl-CoA by the N-terminal NRPS module and subsequent cyclization conducted by the C-terminal KS domain. This is Hybrid PKS-NRPS synthetase TAS1 from Cordyceps militaris (strain CM01) (Caterpillar fungus).